Consider the following 320-residue polypeptide: Aminoacyl tRNA synthase complex-interacting multifunctional protein 2 (320 aa).

At serine 36 the chain carries Phosphoserine. An interaction with PRKN region spans residues 82–162; that stretch reads TPDADLDVTN…HTHSAVRSVP (81 aa). Positions 162 to 225 are interaction with TP53; the sequence is PANLLQCFGE…FLFSLFGQKQ (64 aa). In terms of domain architecture, GST C-terminal spans 220-317; sequence LFGQKQDAVN…NLAPFHTALK (98 aa).

In terms of assembly, part of the multisynthetase complex (MSC), a multisubunit complex that groups tRNA ligases for Arg (RARS1), Asp (DARS1), Gln (QARS1), Ile (IARS1), Leu (LARS1), Lys (KARS1), Met (MARS1) the bifunctional ligase for Glu and Pro (EPRS1) and the auxiliary subunits AIMP1/p43, AIMP2/p38 and EEF1E1/p18. Interacts (via N-terminus) with KARS1. Interacts with EPRS1. Forms a linear complex that contains MARS1, EEF1E1, EPRS1 and AIMP2 that is at the core of the multisubunit complex. Binds FUBP1 (via C-terminus). Interacts in both its unphosphorylated and phosphorylated forms with p53/TP53 (via N-terminus) in the nucleus following UV irradiation. Interacts (via N-terminus) with PRKN/parkin (via first RING-type domain). Interacts with TARS3. Post-translationally, phosphorylated on serine residues in response to UV irradiation. In terms of processing, ubiquitinated by PRKN, leading to its degradation by the proteasome.

The protein localises to the cytoplasm. Its subcellular location is the cytosol. It localises to the nucleus. Required for assembly and stability of the aminoacyl-tRNA synthase complex. Mediates ubiquitination and degradation of FUBP1, a transcriptional activator of MYC, leading to MYC down-regulation which is required for aveolar type II cell differentiation. Blocks MDM2-mediated ubiquitination and degradation of p53/TP53. Functions as a proapoptotic factor. This chain is Aminoacyl tRNA synthase complex-interacting multifunctional protein 2 (AIMP2), found in Bos taurus (Bovine).